The chain runs to 1370 residues: DNA-directed RNA polymerase subunit beta (1370 aa).

It belongs to the RNA polymerase beta chain family. As to quaternary structure, the RNAP catalytic core consists of 2 alpha, 1 beta, 1 beta' and 1 omega subunit. When a sigma factor is associated with the core the holoenzyme is formed, which can initiate transcription.

It carries out the reaction RNA(n) + a ribonucleoside 5'-triphosphate = RNA(n+1) + diphosphate. DNA-dependent RNA polymerase catalyzes the transcription of DNA into RNA using the four ribonucleoside triphosphates as substrates. The sequence is that of DNA-directed RNA polymerase subunit beta from Bordetella bronchiseptica (strain ATCC BAA-588 / NCTC 13252 / RB50) (Alcaligenes bronchisepticus).